The primary structure comprises 404 residues: Deoxyguanosinetriphosphate triphosphohydrolase-like protein (404 aa).

Positions 1-32 (MAVGMAAPHATYASDPARSRGRLFDEPPSKTR) are disordered. Basic and acidic residues predominate over residues 22–32 (RLFDEPPSKTR). The region spanning 69–217 (RLTHTLEVAQ…AAIADDIAYD (149 aa)) is the HD domain.

The protein belongs to the dGTPase family. Type 2 subfamily.

This chain is Deoxyguanosinetriphosphate triphosphohydrolase-like protein, found in Nitrobacter hamburgensis (strain DSM 10229 / NCIMB 13809 / X14).